Reading from the N-terminus, the 627-residue chain is MASPPHLPLLLLLLVVVCNAAGGDGARVNPFTAKAAFIRYWNRRVPNNRPHPAFFVAKLSPLQAADAASFAAALPRLLPPLCARAALLCPSASDTETAASLAVGGGGGGGPFKGYSNANFTNYGSGGVGGADGFSAYSPDLNVVGDSFRRYGRDSTRRVDTFASYEAEGNVVTANFTSYAGAATGGSGSFSAYAADTNVPDSTFTNYDAEANGRRREFTSYSQEANHGSNTFAGYGKNGNGLRETFTTYGNDSNVIASGFTNYGESGNGATDTFTAYGKEGNVPDNTFRSYGAGGNAGVDTFKGYRSESNVGDDSFASYAKGANGNAAEFQNYGGSFNPGTVTFKGYGEGSNPNHHIGFKEYAGSNNSFKGYAKSGVDFKEYHNTSSADAATTMSLEAVSSGHQHLKWSPEPGKFFRETELVSGNTMPMPDIKDKMPPRAFLPRDIAKKIPFKPNAVSEVFGVPLDTAMGKAVTSTVAECERAPSRGETKRCATSAEDIVDFAVEMLGNDIVVRSTASTAGSGGQIRLGNVTGVDGGKVTRSVSCHQSLFPYLVYYCHSVPKVRVYEADIMAADSDQKINHGVAICHLDTSDWSPTHGAFIALGGKPGEVEVCHWIFEGDMTWTVAD.

The N-terminal stretch at 1–25 is a signal peptide; it reads MASPPHLPLLLLLLVVVCNAAGGDG. N-linked (GlcNAc...) asparagine glycosylation is found at Asn-119, Asn-175, Asn-251, Asn-366, Asn-384, and Asn-530. The region spanning 415-626 is the BURP domain; sequence FFRETELVSG…FEGDMTWTVA (212 aa).

In terms of tissue distribution, expressed in stems, leaves, shoot and panicles.

The chain is BURP domain-containing protein 12 (BURP12) from Oryza sativa subsp. japonica (Rice).